The primary structure comprises 317 residues: Ribosomal protein L11 methyltransferase (317 aa).

S-adenosyl-L-methionine is bound by residues Thr158, Gly179, Asp201, and Asn244.

This sequence belongs to the methyltransferase superfamily. PrmA family.

The protein resides in the cytoplasm. It carries out the reaction L-lysyl-[protein] + 3 S-adenosyl-L-methionine = N(6),N(6),N(6)-trimethyl-L-lysyl-[protein] + 3 S-adenosyl-L-homocysteine + 3 H(+). In terms of biological role, methylates ribosomal protein L11. The sequence is that of Ribosomal protein L11 methyltransferase from Streptococcus pyogenes serotype M1.